The following is a 219-amino-acid chain: uncharacterized protein (219 aa).

The protein belongs to the CIA30 family.

It is found in the cytoplasm. Its subcellular location is the nucleus. This is an uncharacterized protein from Schizosaccharomyces pombe (strain 972 / ATCC 24843) (Fission yeast).